The chain runs to 315 residues: tRNA dimethylallyltransferase (315 aa).

Residue 14–21 (GPTASGKT) coordinates ATP. 16–21 (TASGKT) contributes to the substrate binding site. 3 interaction with substrate tRNA regions span residues 39–42 (DSAL), 163–167 (QRIQR), and 248–253 (RCVGYR).

The protein belongs to the IPP transferase family. Monomer. It depends on Mg(2+) as a cofactor.

It catalyses the reaction adenosine(37) in tRNA + dimethylallyl diphosphate = N(6)-dimethylallyladenosine(37) in tRNA + diphosphate. Functionally, catalyzes the transfer of a dimethylallyl group onto the adenine at position 37 in tRNAs that read codons beginning with uridine, leading to the formation of N6-(dimethylallyl)adenosine (i(6)A). The protein is tRNA dimethylallyltransferase of Paraburkholderia phytofirmans (strain DSM 17436 / LMG 22146 / PsJN) (Burkholderia phytofirmans).